The following is a 498-amino-acid chain: Glycerol kinase (498 aa).

Residue threonine 11 coordinates ADP. 3 residues coordinate ATP: threonine 11, serine 12, and serine 13. Position 11 (threonine 11) interacts with sn-glycerol 3-phosphate. An ADP-binding site is contributed by arginine 15. Sn-glycerol 3-phosphate is bound by residues arginine 81, glutamate 82, tyrosine 133, and aspartate 242. Glycerol-binding residues include arginine 81, glutamate 82, tyrosine 133, aspartate 242, and glutamine 243. ADP is bound by residues threonine 264 and glycine 307. ATP-binding residues include threonine 264, glycine 307, glutamine 311, and glycine 412. ADP is bound by residues glycine 412 and asparagine 416.

This sequence belongs to the FGGY kinase family.

It catalyses the reaction glycerol + ATP = sn-glycerol 3-phosphate + ADP + H(+). The protein operates within polyol metabolism; glycerol degradation via glycerol kinase pathway; sn-glycerol 3-phosphate from glycerol: step 1/1. Inhibited by fructose 1,6-bisphosphate (FBP). Its function is as follows. Key enzyme in the regulation of glycerol uptake and metabolism. Catalyzes the phosphorylation of glycerol to yield sn-glycerol 3-phosphate. The protein is Glycerol kinase of Acidovorax sp. (strain JS42).